The primary structure comprises 66 residues: MAAVAGRDDDTFVFMGARHAAPVSADWFRFSGRSPVGTRRSRLTWRLTWLTCPAPPRLCRLPVERA.

This is an uncharacterized protein from Human cytomegalovirus (strain AD169) (HHV-5).